A 197-amino-acid chain; its full sequence is Putative RING-H2 finger protein ATL71 (197 aa).

Residues 20–40 form a helical membrane-spanning segment; sequence MGGLAYGIGVSIGILMLITTI. The tract at residues 53 to 80 is disordered; it reads SASPTTTPRTRRRQRESNGTLPPGQERF. An RING-type; atypical zinc finger spans residues 129-171; sequence CSICLADYKKMDMIRVLPDCNHLFHDNCVDPWLRLHPTCPVCR.

It belongs to the RING-type zinc finger family. ATL subfamily.

Its subcellular location is the membrane. The enzyme catalyses S-ubiquitinyl-[E2 ubiquitin-conjugating enzyme]-L-cysteine + [acceptor protein]-L-lysine = [E2 ubiquitin-conjugating enzyme]-L-cysteine + N(6)-ubiquitinyl-[acceptor protein]-L-lysine.. It functions in the pathway protein modification; protein ubiquitination. This chain is Putative RING-H2 finger protein ATL71 (ATL71), found in Arabidopsis thaliana (Mouse-ear cress).